The following is a 137-amino-acid chain: Seminal plasma sperm motility inhibitor (137 aa).

Positions Met1–Thr21 are cleaved as a signal peptide. Cys30 and Cys51 are joined by a disulfide. The 102-residue stretch at Cys30–Ile131 folds into the CUB domain. An N-linked (GlcNAc...) asparagine glycan is attached at Asn36.

Belongs to the spermadhesin family. Seminal plasma or sperm.

It is found in the secreted. Inhibitor of sperm motility. The polypeptide is Seminal plasma sperm motility inhibitor (SPMI) (Sus scrofa (Pig)).